The primary structure comprises 331 residues: Serpentine receptor class alpha-9 (331 aa).

7 consecutive transmembrane segments (helical) span residues 26-46 (IDLLCIVITFVTTYPAIQLVL), 58-78 (LILESLFFANLYQIFYGIEAI), 104-124 (YLKVILGTTGGMIFAQTGLMI), 142-162 (IIGFSITIIVFFCSSITGKLF), 189-209 (YFTVCTVLPLFNLGISILLKI), 238-258 (VCFLAFSLFILLFIYSVGVGA), and 275-295 (LCVVWLYTIPFIAMLLPLLLI).

This sequence belongs to the nematode receptor-like protein sra family.

The protein resides in the membrane. This chain is Serpentine receptor class alpha-9 (sra-9), found in Caenorhabditis elegans.